The following is a 193-amino-acid chain: Leucyl/phenylalanyl-tRNA--protein transferase (193 aa).

It belongs to the L/F-transferase family.

Its subcellular location is the cytoplasm. It catalyses the reaction N-terminal L-lysyl-[protein] + L-leucyl-tRNA(Leu) = N-terminal L-leucyl-L-lysyl-[protein] + tRNA(Leu) + H(+). The catalysed reaction is N-terminal L-arginyl-[protein] + L-leucyl-tRNA(Leu) = N-terminal L-leucyl-L-arginyl-[protein] + tRNA(Leu) + H(+). The enzyme catalyses L-phenylalanyl-tRNA(Phe) + an N-terminal L-alpha-aminoacyl-[protein] = an N-terminal L-phenylalanyl-L-alpha-aminoacyl-[protein] + tRNA(Phe). Functionally, functions in the N-end rule pathway of protein degradation where it conjugates Leu, Phe and, less efficiently, Met from aminoacyl-tRNAs to the N-termini of proteins containing an N-terminal arginine or lysine. The protein is Leucyl/phenylalanyl-tRNA--protein transferase of Gloeobacter violaceus (strain ATCC 29082 / PCC 7421).